We begin with the raw amino-acid sequence, 755 residues long: LIM domain and actin-binding protein 1 (755 aa).

Met-1 is modified (N-acetylmethionine). Position 15 is a phosphoserine (Ser-15). The span at 43-56 shows a compositional bias: basic and acidic residues; that stretch reads KAAEEANMERKKNN. Positions 43–151 are disordered; that stretch reads KAAEEANMER…YPRSEDSHDF (109 aa). The segment covering 88–97 has biased composition (polar residues); that stretch reads DSLPNSSSDG. Ser-132 is subject to Phosphoserine. Positions 164–166 match the Required for interaction with NPC1L1 motif; the sequence is CLG. 2 stretches are compositionally biased toward basic and acidic residues: residues 168-177 and 199-208; these read SRHEAEKPEM and MMFEKGEHSQ. The disordered stretch occupies residues 168–226; sequence SRHEAEKPEMSENTETSGKIEKYNVPLNRLKMMFEKGEHSQNKSPWTQGRNAGGRRLSE. Phosphoserine occurs at positions 225, 230, and 242. A disordered region spans residues 241 to 379; sequence LSSSAFNSEK…ESSPSKTAKK (139 aa). Residues 249–258 are compositionally biased toward basic and acidic residues; sequence EKNESKRNLE. Residue Ser-263 is modified to Phosphoserine. Positions 292 to 305 are enriched in basic and acidic residues; the sequence is KPSESKTHKWEQKE. Residues 342-354 show a composition bias toward polar residues; it reads CNSQGRSEAQQPI. 4 positions are modified to phosphoserine: Ser-348, Ser-360, Ser-367, and Ser-372. Positions 363 to 375 are enriched in polar residues; sequence ARTSSLPESSPSK. The 61-residue stretch at 386–446 folds into the LIM zinc-binding domain; sequence ESCVECQKTV…KPHFNQLFKS (61 aa). Lys-437 carries the N6-succinyllysine modification. Disordered regions lie at residues 468–493 and 505–714; these read ENEETLGRPAQPPSAGETPHSPGVED and SMEA…DTTT. A Phosphoserine modification is found at Ser-488. Positions 491–511 are required for interaction with MYO5B; the sequence is VEDAPIAKVGVLAASMEAKAS. Composition is skewed to basic and acidic residues over residues 512 to 526 and 555 to 566; these read SQREREENKPAETKK and WPPEDEVCKTEA. Over residues 599-611 the composition is skewed to low complexity; that stretch reads SSVKSPKPLSPSL. Phosphoserine is present on residues Ser-600, Ser-603, Ser-608, and Ser-616. Composition is skewed to basic and acidic residues over residues 638–653 and 662–673; these read RPSREKESVGKSRWQS and EAPRGRDGRSFE. Ser-697, Ser-722, and Ser-737 each carry phosphoserine.

In terms of assembly, interacts with NPC1L1; bridges NPC1L1 with MYO5B. Interacts with MYO5B; bridges MYO5B with NPC1L1. Interacts with PXN; this complex stabilizes actin dynamics. Interacts with F-actin and G-actin. Interacts with LUZP1 (via C-terminus); both proteins restrict ciliation and may work together to regulate this process. Binds RAB40B (GTP-bound); interaction influences LIMA1 subcellular localization in lamellipodia during cell migration. Post-translationally, phosphorylation of the C-terminal region by MAPK1/MAPK3 reduces its association with F-actin and contributes to actin filament reorganization and enhanced cell motility. Ubiquitinated by the ECS(RAB40B) complex leading to its degradation. Expressed throughout the kidney, including renal cortex, medulla, and glomeruli. Expressed in glomeruli, tubular epithelial cells, and extraglomerular vascular endothelial cells (at protein level).

The protein localises to the cytoplasm. It localises to the cell junction. It is found in the focal adhesion. Its subcellular location is the cytoskeleton. The protein resides in the stress fiber. The protein localises to the cell membrane. It localises to the cell projection. It is found in the ruffle. Its subcellular location is the lamellipodium. Functionally, actin-binding protein involved in actin cytoskeleton regulation and dynamics. Increases the number and size of actin stress fibers and inhibits membrane ruffling. Inhibits actin filament depolymerization. Bundles actin filaments, delays filament nucleation and reduces formation of branched filaments. Acts as a negative regulator of primary cilium formation. Plays a role in cholesterol homeostasis. Influences plasma cholesterol levels through regulation of intestinal cholesterol absorption. May act as a scaffold protein by regulating NPC1L1 transportation, an essential protein for cholesterol absorption, to the plasma membrane by recruiting MYO5B to NPC1L1, and thus facilitates cholesterol uptake. The sequence is that of LIM domain and actin-binding protein 1 from Rattus norvegicus (Rat).